A 335-amino-acid chain; its full sequence is Mitochondrial fission regulator 1 (335 aa).

The N-terminal 48 residues, 1–48, are a transit peptide targeting the mitochondrion; the sequence is MIRWFKCFMRMIFEQVGLNMESVLWSSKPYGSSRSIVRKIGTNLSLIQ. The stretch at 134–170 forms a coiled coil; that stretch reads RSTVIANEEAMQKISALENELATLRAQIAKIVILQEQ. A necessary and sufficient to promote mitochondrial fission region spans residues 182-309; the sequence is ASAAVPCVPP…DKVIPKSETN (128 aa). The segment at 219-240 is disordered; sequence RKNRKTNSGPIPTENGPKKPEI.

It belongs to the MTFR1 family. Widely expressed in embryonic tissues with higher expression in cartilage and hypertrophic chondrocytes. Specifically expressed in hypertrophic chondrocytes (at protein level).

It is found in the mitochondrion. Its function is as follows. May play a role in mitochondrial aerobic respiration. May also regulate mitochondrial organization and fission. This chain is Mitochondrial fission regulator 1 (MTFR1), found in Gallus gallus (Chicken).